We begin with the raw amino-acid sequence, 572 residues long: MARILITSAIPYINGIKHLGNLVGSQLPADLYARYMRGRGHEVMFICATDEHGTPAELAAAKAGKPVEDYCAEMHEVQKEIAAGFRLSFDHFGRSSSARNHRLTQHFAGALAENGFIEEVVERQFFSVADNRFLPDRYIEGTCPNCGYDKARGDQCENCTKQLDPTDLIDPRSAISGSTELELRETKHLYLRQRALKDEIEAWIDSKTDWPVLTTSIAKKWLHDGEGLQDRGITRDLKWGVPVRKGSEPWPGMEGKVFYVWFDAPIEYIAGTAEWADANGKTDADWERWWRTDRGAEDVRYVQFMGKDNVPFHTLSFPATIMGSREPWKLVDYIKSFNYLNYDGGQFSTSQGRGVFMDQALSILPADYWRWWLLSHAPENSDSEFTWENFQSSVNKDLADVLGNLVSRVTKFCRSKFGETVPAGGSPGEREHQLVAELQQRLAAYEACMEAMEVRKAASELRALWVAGNEYLQSAAPWTVVKTDPEQAQAMIRLALNLIRLYAVISRPFIPDAAASMMTSLGCEDWSWPADVGRALEVLPAGHGFTTPEVLFRKITDEERAEWQTRFSGVRS.

The short motif at 11–21 (PYINGIKHLGN) is the 'HIGH' region element. Zn(2+) is bound by residues C143, C146, C156, and C159. The 'KMSKS' region motif lies at 346–350 (QFSTS). ATP is bound at residue T349.

This sequence belongs to the class-I aminoacyl-tRNA synthetase family. MetG type 1 subfamily. As to quaternary structure, monomer. It depends on Zn(2+) as a cofactor.

It is found in the cytoplasm. It catalyses the reaction tRNA(Met) + L-methionine + ATP = L-methionyl-tRNA(Met) + AMP + diphosphate. Is required not only for elongation of protein synthesis but also for the initiation of all mRNA translation through initiator tRNA(fMet) aminoacylation. The chain is Methionine--tRNA ligase from Cereibacter sphaeroides (strain ATCC 17029 / ATH 2.4.9) (Rhodobacter sphaeroides).